Here is a 276-residue protein sequence, read N- to C-terminus: Orotidine 5'-phosphate decarboxylase (276 aa).

K96 serves as the catalytic Proton donor.

It belongs to the OMP decarboxylase family. Type 2 subfamily.

The enzyme catalyses orotidine 5'-phosphate + H(+) = UMP + CO2. Its pathway is pyrimidine metabolism; UMP biosynthesis via de novo pathway; UMP from orotate: step 2/2. In Porphyromonas gingivalis (strain ATCC 33277 / DSM 20709 / CIP 103683 / JCM 12257 / NCTC 11834 / 2561), this protein is Orotidine 5'-phosphate decarboxylase.